Here is a 419-residue protein sequence, read N- to C-terminus: NF-kappa-B essential modulator (419 aa).

A disordered region spans residues 1–46 (MSRTPWKSQPCEMVQPSGGPAGDQDVLGEESSLGKPTMLHLPSEQG). Residues 1–197 (MSRTPWKSQP…REALQQQHSV (197 aa)) form a required for interaction with and ubiquitination by MARCHF2 region. Phosphoserine occurs at positions 31, 43, 68, and 85. The tract at residues 44-111 (EQGAPETFQR…RLVERLSLEK (68 aa)) is interaction with CHUK/IKBKB. Positions 100–353 (ARRLVERLSL…KTSCQESARI (254 aa)) form a coiled coil. Glycyl lysine isopeptide (Lys-Gly) (interchain with G-Cter in ubiquitin) cross-links involve residues Lys111, Lys139, Lys143, Lys226, Lys246, and Lys264. The interaction with TANK stretch occupies residues 150-257 (LGELQESQSR…SVVSSERNRG (108 aa)). The segment at 242–350 (DNHIKSSVVS…SRLKTSCQES (109 aa)) is ubiquitin-binding (UBAN). Positions 246–365 (KSSVVSSERN…MRKRHVEVSQ (120 aa)) are self-association. The required for interaction with TNFAIP3 stretch occupies residues 251 to 419 (SSERNRGLQL…LQIHVMECIE (169 aa)). Lys277 participates in a covalent cross-link: Glycyl lysine isopeptide (Lys-Gly) (interchain with G-Cter in SUMO); alternate. Residue Lys277 forms a Glycyl lysine isopeptide (Lys-Gly) (interchain with G-Cter in ubiquitin); alternate linkage. Residues Lys283, Lys285, Lys292, and Lys302 each participate in a glycyl lysine isopeptide (Lys-Gly) (interchain with G-Cter in ubiquitin) cross-link. A Glycyl lysine isopeptide (Lys-Gly) (interchain with G-Cter in SUMO); alternate cross-link involves residue Lys309. Lys309 is covalently cross-linked (Glycyl lysine isopeptide (Lys-Gly) (interchain with G-Cter in ubiquitin); alternate). The leucine-zipper stretch occupies residues 322 to 343 (LAERKELLQEQLEQLQREYSRL). A Glycyl lysine isopeptide (Lys-Gly) (interchain with G-Cter in ubiquitin) cross-link involves residue Lys326. Residues 363-394 (VSQPTLPPAPAHHSFHPALPSQRRSPPEEPPN) are disordered. A phosphoserine mark is found at Ser376 and Ser387. An interaction with CYLD region spans residues 382 to 419 (PSQRRSPPEEPPNFCCPKCQYQAPDMDTLQIHVMECIE). The CCHC NOA-type zinc finger occupies 389–419 (PEEPPNFCCPKCQYQAPDMDTLQIHVMECIE). Cys397 lines the Zn(2+) pocket. Residue Lys399 forms a Glycyl lysine isopeptide (Lys-Gly) (interchain with G-Cter in ubiquitin) linkage. Residues Cys400, His413, and Cys417 each coordinate Zn(2+).

As to quaternary structure, homodimer; disulfide-linked. Component of the I-kappa-B-kinase (IKK) core complex consisting of CHUK, IKBKB and IKBKG; probably four alpha/CHUK-beta/IKBKB dimers are associated with four gamma/IKBKG subunits. The IKK core complex seems to associate with regulatory or adapter proteins to form a IKK-signalosome holo-complex. The IKK complex associates with TERF2IP/RAP1, leading to promote IKK-mediated phosphorylation of RELA/p65. Part of a complex composed of NCOA2, NCOA3, CHUK/IKKA, IKBKB, IKBKG and CREBBP. Interacts with COPS3, CYLD, NALP2, TRPC4AP and PIDD1. Interacts with ATM; the complex is exported from the nucleus. Interacts with TRAF6. Interacts with IKBKE. Interacts with TANK; the interaction is enhanced by IKBKE and TBK1. Part of a ternary complex consisting of TANK, IKBKB and IKBKG. Interacts with ZFAND5. Interacts with RIPK2. Interacts with TNIP1 and TNFAIP3; TNIP1 facilitates the TNFAIP3-mediated de-ubiquitination of IKBKG. Interacts with TNFAIP3; the interaction is induced by TNF stimulation and by polyubiquitin. Binds (via UBAN region) polyubiquitin; binds both 'Lys-63'-linked and linear polyubiquitin, with higher affinity for linear ubiquitin. Interacts with NLRP10. Interacts with TANK; this interaction increases in response to DNA damage. Interacts with USP10; this interaction increases in response to DNA damage. Interacts with ZC3H12A; this interaction increases in response to DNA damage. Interacts with IFIT5; the interaction synergizes the recruitment of IKK to MAP3K7 and enhances IKK phosphorylation. Interacts with TRIM29; this interaction induces IKBKG/NEMO ubiquitination and proteolytic degradation. Interacts with TRIM13; this interaction leads to IKBKG/NEMO ubiquitination. Interacts with ARFIP2. Interacts with RIPK1. Interacts with (ubiquitinated) BCL10; interaction with polyubiquitinated BCL10 via both 'Lys-63'-linked and linear ubiquitin is required for TCR-induced NF-kappa-B activation. Interacts with MARCHF2; during the late stages of macrophage viral and bacterial infection; the interaction leads to ubiquitination and degradation of IKBKG/NEMO. In terms of processing, phosphorylation at Ser-68 attenuates aminoterminal homodimerization. Polyubiquitinated on Lys-285 via 'Lys-63'-linked ubiquitin; the ubiquitination is mediated downstream of NOD2 and RIPK2 and probably plays a role in signaling by facilitating interactions with ubiquitin domain-containing proteins and activates the NF-kappa-B pathway. Polyubiquitinated on Lys-285 and Lys-399 through 'Lys-63'-linked ubiquitin; the ubiquitination is mediated by BCL10, MALT1 and TRAF6 and probably plays a role in signaling by facilitating interactions with ubiquitin domain-containing proteins and activates the NF-kappa-B pathway. Monoubiquitinated on Lys-277 and Lys-309; promotes nuclear export. Polyubiquitinated through 'Lys-27' by TRIM23; involved in antiviral innate and inflammatory responses. Linear polyubiquitinated on Lys-111, Lys-143, Lys-226, Lys-246, Lys-264, Lys-277, Lys-285, Lys-292, Lys-302, Lys-309 and Lys-326; the head-to-tail polyubiquitination is mediated by the LUBAC complex and plays a key role in NF-kappa-B activation. Deubiquitinated by USP10 in a TANK-dependent and -independent manner, leading to the negative regulation of NF-kappa-B signaling upon DNA damage. Ubiquitinated at Lys-326 by MARCHF2 following bacterial and viral infection which leads to its degradation. Post-translationally, sumoylated on Lys-277 and Lys-309 with SUMO1; the modification results in phosphorylation of Ser-85 by ATM leading to a replacement of the sumoylation by mono-ubiquitination on these residues. In terms of processing, neddylated by TRIM40, resulting in stabilization of NFKBIA and down-regulation of NF-kappa-B activity. (Microbial infection) Cleaved by porcine reproductive and respiratory syndrome virus serine protease nsp4 after Glu-349. The cleavage inhibits NEMO proper function.

It is found in the cytoplasm. The protein localises to the nucleus. In terms of biological role, regulatory subunit of the IKK core complex which phosphorylates inhibitors of NF-kappa-B thus leading to the dissociation of the inhibitor/NF-kappa-B complex and ultimately the degradation of the inhibitor. Its binding to scaffolding polyubiquitin plays a key role in IKK activation by multiple signaling receptor pathways. Can recognize and bind both 'Lys-63'-linked and linear polyubiquitin upon cell stimulation, with a much highr affinity for linear polyubiquitin. Could be implicated in NF-kappa-B-mediated protection from cytokine toxicity. Essential for viral activation of IRF3. Involved in TLR3- and IFIH1-mediated antiviral innate response; this function requires 'Lys-27'-linked polyubiquitination. The chain is NF-kappa-B essential modulator (IKBKG) from Sus scrofa (Pig).